The following is a 431-amino-acid chain: 3-phosphoshikimate 1-carboxyvinyltransferase (431 aa).

3-phosphoshikimate is bound by residues Lys-21, Ser-22, and Arg-26. Lys-21 is a phosphoenolpyruvate binding site. Phosphoenolpyruvate is bound by residues Gly-94 and Arg-122. 4 residues coordinate 3-phosphoshikimate: Ser-167, Gln-169, Asp-315, and Lys-342. Gln-169 is a binding site for phosphoenolpyruvate. The Proton acceptor role is filled by Asp-315. Arg-346 and Arg-388 together coordinate phosphoenolpyruvate.

The protein belongs to the EPSP synthase family. As to quaternary structure, monomer.

It is found in the cytoplasm. It carries out the reaction 3-phosphoshikimate + phosphoenolpyruvate = 5-O-(1-carboxyvinyl)-3-phosphoshikimate + phosphate. The protein operates within metabolic intermediate biosynthesis; chorismate biosynthesis; chorismate from D-erythrose 4-phosphate and phosphoenolpyruvate: step 6/7. Its function is as follows. Catalyzes the transfer of the enolpyruvyl moiety of phosphoenolpyruvate (PEP) to the 5-hydroxyl of shikimate-3-phosphate (S3P) to produce enolpyruvyl shikimate-3-phosphate and inorganic phosphate. The chain is 3-phosphoshikimate 1-carboxyvinyltransferase from Pelotomaculum thermopropionicum (strain DSM 13744 / JCM 10971 / SI).